Here is a 248-residue protein sequence, read N- to C-terminus: Triosephosphate isomerase (248 aa).

2 residues coordinate substrate: asparagine 11 and lysine 13. Histidine 95 functions as the Electrophile in the catalytic mechanism. Residue glutamate 165 is the Proton acceptor of the active site.

Belongs to the triosephosphate isomerase family. Homodimer.

The protein resides in the cytoplasm. It catalyses the reaction dihydroxyacetone phosphate = methylglyoxal + phosphate. It carries out the reaction D-glyceraldehyde 3-phosphate = dihydroxyacetone phosphate. It participates in carbohydrate degradation; glycolysis; D-glyceraldehyde 3-phosphate from glycerone phosphate: step 1/1. Its pathway is carbohydrate biosynthesis; gluconeogenesis. Functionally, triosephosphate isomerase is an extremely efficient metabolic enzyme that catalyzes the interconversion between dihydroxyacetone phosphate (DHAP) and D-glyceraldehyde-3-phosphate (G3P) in glycolysis and gluconeogenesis. Its function is as follows. It is also responsible for the non-negligible production of methylglyoxal a reactive cytotoxic side-product that modifies and can alter proteins, DNA and lipids. The chain is Triosephosphate isomerase (tpi1) from Xenopus laevis (African clawed frog).